A 454-amino-acid polypeptide reads, in one-letter code: 3-phosphoshikimate 1-carboxyvinyltransferase (454 aa).

3 residues coordinate 3-phosphoshikimate: lysine 39, serine 40, and arginine 44. Position 39 (lysine 39) interacts with phosphoenolpyruvate. Phosphoenolpyruvate is bound by residues glycine 112 and arginine 140. 3-phosphoshikimate-binding residues include serine 185, glutamine 187, aspartate 333, and lysine 360. Glutamine 187 provides a ligand contact to phosphoenolpyruvate. Aspartate 333 (proton acceptor) is an active-site residue. Phosphoenolpyruvate-binding residues include arginine 364 and arginine 405.

The protein belongs to the EPSP synthase family. In terms of assembly, monomer.

It localises to the cytoplasm. The catalysed reaction is 3-phosphoshikimate + phosphoenolpyruvate = 5-O-(1-carboxyvinyl)-3-phosphoshikimate + phosphate. It participates in metabolic intermediate biosynthesis; chorismate biosynthesis; chorismate from D-erythrose 4-phosphate and phosphoenolpyruvate: step 6/7. In terms of biological role, catalyzes the transfer of the enolpyruvyl moiety of phosphoenolpyruvate (PEP) to the 5-hydroxyl of shikimate-3-phosphate (S3P) to produce enolpyruvyl shikimate-3-phosphate and inorganic phosphate. This chain is 3-phosphoshikimate 1-carboxyvinyltransferase, found in Xylella fastidiosa (strain Temecula1 / ATCC 700964).